The chain runs to 215 residues: MDSAFHEALASGIEALGLPVDEAARALLERYADRLLAWNRKVNLTAITAPAELAEKHLVDSLVLLPFLTGAGTLLDVGSGAGLPGIPLACARRDLSVTCCDGVAKKIAFVKAVSAELDLPVRGVAVRAEGEPEREGLPRADAVVSRALAEPDRWVPVGARYLAEGGTLFAMLGREVDRAGLEAAGAAEGLTLVGLDVYELPVSHAARAVARWQQR.

S-adenosyl-L-methionine-binding positions include Gly78, Leu83, 128-129 (AE), and Arg146.

This sequence belongs to the methyltransferase superfamily. RNA methyltransferase RsmG family.

It localises to the cytoplasm. It carries out the reaction guanosine(527) in 16S rRNA + S-adenosyl-L-methionine = N(7)-methylguanosine(527) in 16S rRNA + S-adenosyl-L-homocysteine. Specifically methylates the N7 position of guanine in position 527 of 16S rRNA. This chain is Ribosomal RNA small subunit methyltransferase G, found in Anaeromyxobacter dehalogenans (strain 2CP-1 / ATCC BAA-258).